A 271-amino-acid polypeptide reads, in one-letter code: Type III pantothenate kinase (271 aa).

6–13 (DVRNTHTV) contacts ATP. A substrate-binding site is contributed by 109 to 112 (GADR). Residue aspartate 111 is the Proton acceptor of the active site. Aspartate 131 is a binding site for K(+). Serine 134 provides a ligand contact to ATP. Threonine 186 serves as a coordination point for substrate.

Belongs to the type III pantothenate kinase family. In terms of assembly, homodimer. NH4(+) serves as cofactor. K(+) is required as a cofactor.

Its subcellular location is the cytoplasm. It carries out the reaction (R)-pantothenate + ATP = (R)-4'-phosphopantothenate + ADP + H(+). The protein operates within cofactor biosynthesis; coenzyme A biosynthesis; CoA from (R)-pantothenate: step 1/5. Functionally, catalyzes the phosphorylation of pantothenate (Pan), the first step in CoA biosynthesis. The polypeptide is Type III pantothenate kinase (Mycobacterium avium (strain 104)).